Reading from the N-terminus, the 515-residue chain is NAD(P)H-quinone oxidoreductase subunit 2 (515 aa).

The next 14 helical transmembrane spans lie at 14–34 (TILP…ADLI), 42–62 (WTPY…IPLW), 79–99 (LSLF…LMSI), 109–128 (LGEF…FIAG), 132–151 (LVFI…LLTG), 167–187 (LLIG…LYGL), 206–226 (LGLV…ISAV), 240–260 (PTPV…ALAI), 274–294 (WQLI…VVAL), 302–322 (MLAY…VVGT), 330–350 (LFYL…VILF), 374–394 (LGLS…GFFG), 396–416 (IYLF…LGLL), and 462–482 (VGLV…NPLF).

It belongs to the complex I subunit 2 family. As to quaternary structure, NDH-1 can be composed of about 15 different subunits; different subcomplexes with different compositions have been identified which probably have different functions.

The protein resides in the cellular thylakoid membrane. The enzyme catalyses a plastoquinone + NADH + (n+1) H(+)(in) = a plastoquinol + NAD(+) + n H(+)(out). It catalyses the reaction a plastoquinone + NADPH + (n+1) H(+)(in) = a plastoquinol + NADP(+) + n H(+)(out). Its function is as follows. NDH-1 shuttles electrons from an unknown electron donor, via FMN and iron-sulfur (Fe-S) centers, to quinones in the respiratory and/or the photosynthetic chain. The immediate electron acceptor for the enzyme in this species is believed to be plastoquinone. Couples the redox reaction to proton translocation, and thus conserves the redox energy in a proton gradient. Cyanobacterial NDH-1 also plays a role in inorganic carbon-concentration. The protein is NAD(P)H-quinone oxidoreductase subunit 2 of Thermosynechococcus vestitus (strain NIES-2133 / IAM M-273 / BP-1).